The primary structure comprises 44 residues: uncharacterized protein (44 aa).

This is an uncharacterized protein from Escherichia coli (strain K12).